The chain runs to 1219 residues: FK506-binding protein 15 (1219 aa).

Methionine 1 carries the N-acetylmethionine modification. Phosphoserine occurs at positions 14 and 23. Residues 41–66 are disordered; the sequence is YTAPKQPKKGQGTAATGNQATPKTAP. Positions 53–66 are enriched in polar residues; sequence TAATGNQATPKTAP. Residues 72–169 are important for function in growth cone organization; the sequence is PTILVATAVH…AVEFNKQVCI (98 aa). N6-acetyllysine is present on lysine 92. One can recognise a PPIase FKBP-type domain in the interval 197 to 290; sequence GDSLEVAYTG…VFEVEVRRVK (94 aa). Residues 294-349 form a disordered region; that stretch reads DSGSDGHSVSSRDSAAPSPIPGADNLSADPVVSPPTSIPFKSGEPALRTKSNSLSE. Serine 307, serine 311, serine 326, serine 344, serine 346, and serine 356 each carry phosphoserine. Residues 381–433 form a disordered region; it reads PQLDSNDSEIEDVNTLQGGGQPVVTPSVQPSLHPAHPALPQMTSQAPQPSVTG. The segment covering 421-433 has biased composition (polar residues); it reads QMTSQAPQPSVTG. Coiled-coil stretches lie at residues 522–789, 818–878, and 925–951; these read AVSK…TDQA, DEHL…GVEA, and TLQL…AEER. The residue at position 619 (serine 619) is a Phosphoserine. The disordered stretch occupies residues 739–761; that stretch reads LEKNLSERKKKSAQERSQAEEEI. A disordered region spans residues 931-1219; it reads QQEQEKEESS…DDDDDIDWLG (289 aa). Residues serine 939, serine 940, serine 941, and serine 956 each carry the phosphoserine modification. Positions 957-971 are enriched in low complexity; it reads QEQSASASSGQPQAP. 6 positions are modified to phosphoserine: serine 979, serine 1024, serine 1056, serine 1061, serine 1065, and serine 1097. Residues 1090–1100 are compositionally biased toward polar residues; it reads QESSTRLSLTS. The residue at position 1099 (threonine 1099) is a Phosphothreonine. Serine 1114 is subject to Phosphoserine. The span at 1123-1139 shows a compositional bias: basic and acidic residues; that stretch reads LKKDDVTSSTGPHKELS. 5 positions are modified to phosphoserine: serine 1158, serine 1161, serine 1162, serine 1164, and serine 1195. Threonine 1203 carries the post-translational modification Phosphothreonine. Residues 1207–1219 are compositionally biased toward acidic residues; it reads GDDDDDDDIDWLG.

It belongs to the FKBP-type PPIase family. In terms of assembly, interacts with WIP and actin. Interacts with TBC1D23.

It is found in the cytoplasm. The protein resides in the cell projection. It localises to the axon. Its subcellular location is the early endosome. Functionally, may be involved in the cytoskeletal organization of neuronal growth cones. Seems to be inactive as a PPIase. Involved in the transport of early endosomes at the level of transition between microfilament-based and microtubule-based movement. In Homo sapiens (Human), this protein is FK506-binding protein 15 (FKBP15).